The primary structure comprises 462 residues: tRNA modification GTPase MnmE (462 aa).

(6S)-5-formyl-5,6,7,8-tetrahydrofolate is bound by residues R23, E86, and K125. One can recognise a TrmE-type G domain in the interval 221 to 384 (GIPVAIVGEP…LKNQLLSFVN (164 aa)). Position 231 (N231) interacts with K(+). GTP is bound by residues 231–236 (NVGKST), 250–256 (SEIAGTT), and 275–278 (DTAG). Position 235 (S235) interacts with Mg(2+). K(+) contacts are provided by S250, I252, and T255. T256 serves as a coordination point for Mg(2+). Residue K462 participates in (6S)-5-formyl-5,6,7,8-tetrahydrofolate binding.

The protein belongs to the TRAFAC class TrmE-Era-EngA-EngB-Septin-like GTPase superfamily. TrmE GTPase family. Homodimer. Heterotetramer of two MnmE and two MnmG subunits. Requires K(+) as cofactor.

The protein localises to the cytoplasm. Functionally, exhibits a very high intrinsic GTPase hydrolysis rate. Involved in the addition of a carboxymethylaminomethyl (cmnm) group at the wobble position (U34) of certain tRNAs, forming tRNA-cmnm(5)s(2)U34. The sequence is that of tRNA modification GTPase MnmE from Flavobacterium psychrophilum (strain ATCC 49511 / DSM 21280 / CIP 103535 / JIP02/86).